A 78-amino-acid polypeptide reads, in one-letter code: uncharacterized protein (78 aa).

The segment at 58–78 (EANDPEKKIPSTAAKAISLSP) is disordered.

This is an uncharacterized protein from Vaccinia virus (strain Copenhagen) (VACV).